The chain runs to 76 residues: Small ribosomal subunit protein bS18 (76 aa).

This sequence belongs to the bacterial ribosomal protein bS18 family. Part of the 30S ribosomal subunit. Forms a tight heterodimer with protein bS6.

In terms of biological role, binds as a heterodimer with protein bS6 to the central domain of the 16S rRNA, where it helps stabilize the platform of the 30S subunit. This is Small ribosomal subunit protein bS18 from Alkaliphilus metalliredigens (strain QYMF).